A 254-amino-acid chain; its full sequence is Sugar fermentation stimulation protein homolog (254 aa).

Belongs to the SfsA family.

The protein is Sugar fermentation stimulation protein homolog of Synechococcus sp. (strain CC9605).